The following is a 332-amino-acid chain: Protein FAM131B (332 aa).

The segment at 1 to 22 (MDSTSSLHGSSLHRPSTEQTRT) is disordered. Phosphoserine occurs at positions 47, 114, and 117. A disordered region spans residues 221 to 332 (LGPAFDDSQP…FDEEEGDANN (112 aa)). 2 stretches are compositionally biased toward basic and acidic residues: residues 272–281 (PVEEEKRPLA) and 288–302 (AGCRDLESLSPREDP). Ser-295, Ser-297, and Ser-313 each carry phosphoserine. A Phosphothreonine modification is found at Thr-316. Phosphoserine is present on residues Ser-317, Ser-318, and Ser-322. Residues 323–332 (FDEEEGDANN) show a composition bias toward acidic residues.

Belongs to the FAM131 family.

The polypeptide is Protein FAM131B (Fam131b) (Rattus norvegicus (Rat)).